The following is a 144-amino-acid chain: Interleukin-9 (144 aa).

The N-terminal stretch at 1 to 18 is a signal peptide; that stretch reads MLVTYILASVLLFSSVLG. Q19 is modified (pyrrolidone carboxylic acid). N50, N78, N101, and N114 each carry an N-linked (GlcNAc...) asparagine glycan.

This sequence belongs to the IL-7/IL-9 family. Interacts with IL9R. Interacts with IL2RG.

It is found in the secreted. Functionally, multifunctional cytokine secreted mainly by T-helper 2 lymphocytes and also mast cells or NKT cells that plays important roles in the immune response against parasites. Affects intestinal epithelial permeability and adaptive immunity. In addition, induces the differentiation of specific T-cell subsets such as IL-17 producing helper T-cells (TH17) and also proliferation and differentiation of mast cells. Mechanistically, exerts its biological effects through a receptor composed of IL9R subunit and a signal transducing subunit IL2RG. Receptor stimulation results in the rapid activation of JAK1 and JAK3 kinase activities leading to STAT1, STAT3 and STAT5-mediated transcriptional programs. Induction of differentiation genes seems to be mediated by STAT1 alone, while protection of cells from apoptosis depends on STAT3 and STAT5. In Mus musculus (Mouse), this protein is Interleukin-9 (Il9).